The chain runs to 179 residues: Shikimate kinase (179 aa).

An ATP-binding site is contributed by 15–20 (GAGKTS). Residue threonine 19 participates in Mg(2+) binding. Substrate contacts are provided by aspartate 37, arginine 61, and glycine 83. Residue arginine 122 participates in ATP binding. A substrate-binding site is contributed by arginine 142.

Belongs to the shikimate kinase family. Monomer. It depends on Mg(2+) as a cofactor.

Its subcellular location is the cytoplasm. It catalyses the reaction shikimate + ATP = 3-phosphoshikimate + ADP + H(+). It participates in metabolic intermediate biosynthesis; chorismate biosynthesis; chorismate from D-erythrose 4-phosphate and phosphoenolpyruvate: step 5/7. Functionally, catalyzes the specific phosphorylation of the 3-hydroxyl group of shikimic acid using ATP as a cosubstrate. The sequence is that of Shikimate kinase from Coxiella burnetii (strain Dugway 5J108-111).